Here is a 211-residue protein sequence, read N- to C-terminus: ATP phosphoribosyltransferase (211 aa).

Belongs to the ATP phosphoribosyltransferase family. Short subfamily. Heteromultimer composed of HisG and HisZ subunits.

It is found in the cytoplasm. It carries out the reaction 1-(5-phospho-beta-D-ribosyl)-ATP + diphosphate = 5-phospho-alpha-D-ribose 1-diphosphate + ATP. The protein operates within amino-acid biosynthesis; L-histidine biosynthesis; L-histidine from 5-phospho-alpha-D-ribose 1-diphosphate: step 1/9. Functionally, catalyzes the condensation of ATP and 5-phosphoribose 1-diphosphate to form N'-(5'-phosphoribosyl)-ATP (PR-ATP). Has a crucial role in the pathway because the rate of histidine biosynthesis seems to be controlled primarily by regulation of HisG enzymatic activity. This is ATP phosphoribosyltransferase from Clostridium botulinum (strain 657 / Type Ba4).